The chain runs to 118 residues: uncharacterized protein (118 aa).

Positions 1–118 (MASARGAKQS…AARQNEKTAR (118 aa)) are disordered. Low complexity predominate over residues 13-28 (RVGTTRYTETSTVRVE). The segment covering 29-49 (TSSHRVETSSRRVETSQRRSE) has biased composition (basic and acidic residues).

This is an uncharacterized protein from Homo sapiens (Human).